The sequence spans 216 residues: Peptide methionine sulfoxide reductase MsrA (216 aa).

C54 is an active-site residue.

The protein belongs to the MsrA Met sulfoxide reductase family.

It catalyses the reaction L-methionyl-[protein] + [thioredoxin]-disulfide + H2O = L-methionyl-(S)-S-oxide-[protein] + [thioredoxin]-dithiol. The catalysed reaction is [thioredoxin]-disulfide + L-methionine + H2O = L-methionine (S)-S-oxide + [thioredoxin]-dithiol. Its function is as follows. Has an important function as a repair enzyme for proteins that have been inactivated by oxidation. Catalyzes the reversible oxidation-reduction of methionine sulfoxide in proteins to methionine. This is Peptide methionine sulfoxide reductase MsrA from Xylella fastidiosa (strain Temecula1 / ATCC 700964).